Reading from the N-terminus, the 199-residue chain is Large ribosomal subunit protein bL25 (199 aa).

This sequence belongs to the bacterial ribosomal protein bL25 family. CTC subfamily. Part of the 50S ribosomal subunit; part of the 5S rRNA/L5/L18/L25 subcomplex. Contacts the 5S rRNA. Binds to the 5S rRNA independently of L5 and L18.

Functionally, this is one of the proteins that binds to the 5S RNA in the ribosome where it forms part of the central protuberance. This is Large ribosomal subunit protein bL25 from Chlorobaculum tepidum (strain ATCC 49652 / DSM 12025 / NBRC 103806 / TLS) (Chlorobium tepidum).